A 554-amino-acid polypeptide reads, in one-letter code: Oxygen-dependent choline dehydrogenase (554 aa).

4-33 is a binding site for FAD; that stretch reads DYIIIGAGSAGNVLATRLTEDPNTTVLLLE. The active-site Proton acceptor is His473.

This sequence belongs to the GMC oxidoreductase family. FAD is required as a cofactor.

It catalyses the reaction choline + A = betaine aldehyde + AH2. The catalysed reaction is betaine aldehyde + NAD(+) + H2O = glycine betaine + NADH + 2 H(+). The protein operates within amine and polyamine biosynthesis; betaine biosynthesis via choline pathway; betaine aldehyde from choline (cytochrome c reductase route): step 1/1. Its function is as follows. Involved in the biosynthesis of the osmoprotectant glycine betaine. Catalyzes the oxidation of choline to betaine aldehyde and betaine aldehyde to glycine betaine at the same rate. This is Oxygen-dependent choline dehydrogenase from Klebsiella pneumoniae (strain 342).